A 189-amino-acid chain; its full sequence is MLERLKDSLIRSPIIKRGEYNYFIHPISDGVPSIDPHLVEEISDYISEIADMNVDTILTVEAMGIPVANALSLKTGIPLTIVRKRPYFLEGEVELSQSTGYSKGVLYINGLKKGDRIIIVDDVISTGGTLLALVRALQTIGVEVMDVISVIGRGDGYLKLRELGVEPKILVTIDVGEKGVEIKDVFGNQ.

It belongs to the purine/pyrimidine phosphoribosyltransferase family. Archaeal HPRT subfamily. As to quaternary structure, homodimer.

Its subcellular location is the cytoplasm. The catalysed reaction is IMP + diphosphate = hypoxanthine + 5-phospho-alpha-D-ribose 1-diphosphate. It carries out the reaction GMP + diphosphate = guanine + 5-phospho-alpha-D-ribose 1-diphosphate. It functions in the pathway purine metabolism; IMP biosynthesis via salvage pathway; IMP from hypoxanthine: step 1/1. Catalyzes a salvage reaction resulting in the formation of IMP that is energically less costly than de novo synthesis. The protein is Hypoxanthine/guanine phosphoribosyltransferase of Methanosarcina mazei (strain ATCC BAA-159 / DSM 3647 / Goe1 / Go1 / JCM 11833 / OCM 88) (Methanosarcina frisia).